We begin with the raw amino-acid sequence, 197 residues long: dTTP/UTP pyrophosphatase (197 aa).

Asp70 acts as the Proton acceptor in catalysis.

Belongs to the Maf family. YhdE subfamily. It depends on a divalent metal cation as a cofactor.

It localises to the cytoplasm. The catalysed reaction is dTTP + H2O = dTMP + diphosphate + H(+). It catalyses the reaction UTP + H2O = UMP + diphosphate + H(+). In terms of biological role, nucleoside triphosphate pyrophosphatase that hydrolyzes dTTP and UTP. May have a dual role in cell division arrest and in preventing the incorporation of modified nucleotides into cellular nucleic acids. This Shigella dysenteriae serotype 1 (strain Sd197) protein is dTTP/UTP pyrophosphatase (yceF).